We begin with the raw amino-acid sequence, 114 residues long: Large ribosomal subunit protein P2 (114 aa).

The disordered stretch occupies residues 84-114 (TDALQAGSKKGETKEGPKEESDEDMGFGLFD). The span at 92–102 (KKGETKEGPKE) shows a compositional bias: basic and acidic residues.

This sequence belongs to the eukaryotic ribosomal protein P1/P2 family. As to quaternary structure, P1 and P2 exist as dimers at the large ribosomal subunit. Post-translationally, phosphorylated.

Plays an important role in the elongation step of protein synthesis. This Brugia malayi (Filarial nematode worm) protein is Large ribosomal subunit protein P2 (rpp-2).